Consider the following 121-residue polypeptide: Mu-hexatoxin-Mg1a (121 aa).

Positions 1 to 20 are cleaved as a signal peptide; sequence MMTLSPFLLLLIAAVVIGNA. Residues 21–80 constitute a propeptide that is removed on maturation; it reads SEGEVKNEFEERLKDEFKDPSRSEVAEVILLRELEVLEETLFGKEMTSDTEENRNSREKR. Intrachain disulfides connect Cys-81–Cys-95, Cys-88–Cys-102, and Cys-94–Cys-116. Lys-120 carries the lysine amide modification.

The protein belongs to the neurotoxin 14 (magi-1) family. 09 (magi-1) subfamily. As to expression, expressed by the venom gland.

Its subcellular location is the secreted. In terms of biological role, insecticidal neurotoxin. Shows competition for site 3 of insect voltage-gated sodium channels (Nav). Induces flaccid paralysis when injected into lepidopteran larvae. Is not toxic to mice when injected intracranially at 20 pmol/g. This chain is Mu-hexatoxin-Mg1a, found in Macrothele gigas (Japanese funnel web spider).